Here is a 304-residue protein sequence, read N- to C-terminus: Tyrosine recombinase XerC (304 aa).

The 87-residue stretch at 6-92 (NKLYLQAQAY…VLRQWFAYLV (87 aa)) folds into the Core-binding (CB) domain. In terms of domain architecture, Tyr recombinase spans 113 to 292 (HLPKNIDAER…DFQHLAKIYD (180 aa)). Catalysis depends on residues Arg-152, Lys-176, His-244, Arg-247, and His-270. Residue Tyr-279 is the O-(3'-phospho-DNA)-tyrosine intermediate of the active site.

It belongs to the 'phage' integrase family. XerC subfamily. In terms of assembly, forms a cyclic heterotetrameric complex composed of two molecules of XerC and two molecules of XerD.

The protein resides in the cytoplasm. Functionally, site-specific tyrosine recombinase, which acts by catalyzing the cutting and rejoining of the recombining DNA molecules. The XerC-XerD complex is essential to convert dimers of the bacterial chromosome into monomers to permit their segregation at cell division. It also contributes to the segregational stability of plasmids. This chain is Tyrosine recombinase XerC, found in Haemophilus ducreyi (strain 35000HP / ATCC 700724).